Here is a 468-residue protein sequence, read N- to C-terminus: mRNA cleavage and polyadenylation factor CLP1 (468 aa).

The segment at 1–22 is disordered; sequence MLSLPGLNLAPQPAEPLNAPTS. ATP contacts are provided by residues E35, K74, and 138–143; that span reads HSGKTS.

Belongs to the Clp1 family. Clp1 subfamily. Component of a pre-mRNA cleavage factor complex. Interacts directly with PCF11.

The protein resides in the nucleus. Its function is as follows. Required for endonucleolytic cleavage during polyadenylation-dependent pre-mRNA 3'-end formation. This chain is mRNA cleavage and polyadenylation factor CLP1, found in Phaeosphaeria nodorum (strain SN15 / ATCC MYA-4574 / FGSC 10173) (Glume blotch fungus).